The following is a 258-amino-acid chain: Adenylate kinase (258 aa).

52 to 57 contacts ATP; that stretch reads GAGKGT. The interval 72-101 is NMP; that stretch reads ATGDMLRSQVAKKTELGKEAKKIMDQGGLV. Residues threonine 73, arginine 78, 99–101, 128–131, and glutamine 135 contribute to the AMP site; these read GLV and GFPR. The segment at 169-206 is LID; it reads GRLVHPASGRSYHKVFNPPKQEMKDDITGEPLIQRSDD. Residues arginine 170 and 179–180 contribute to the ATP site; that span reads SY. Positions 203 and 214 each coordinate AMP. Glutamine 242 contacts ATP.

It belongs to the adenylate kinase family. AK2 subfamily. Monomer.

Its subcellular location is the cytoplasm. The protein resides in the cytosol. It is found in the mitochondrion intermembrane space. It carries out the reaction AMP + ATP = 2 ADP. In terms of biological role, catalyzes the reversible transfer of the terminal phosphate group between ATP and AMP. Plays an important role in cellular energy homeostasis and in adenine nucleotide metabolism. Adenylate kinase activity is critical for regulation of the phosphate utilization and the AMP de novo biosynthesis pathways. The sequence is that of Adenylate kinase (adk1) from Aspergillus oryzae (strain ATCC 42149 / RIB 40) (Yellow koji mold).